A 61-amino-acid chain; its full sequence is uncharacterized protein (61 aa).

This is an uncharacterized protein from Escherichia coli O6:K15:H31 (strain 536 / UPEC).